Reading from the N-terminus, the 537-residue chain is MATVDLSWRLPLYILLLLLATTWVSAAVNDCSHLKCFYNSRANVSCMWSPEEALNVTSCHIHAKSDMRHWNKTCELTPVRQASWACNLILGPLPDSQSLTSVDLLSLSVVCWEEKGWRRVKTCTFHPFDNLRLIAPHSLQVLHIETRRCNISWEVSQVSHYVNPYLEFEARRRLLDRSWEDASVFSLKQRQQWIFLETLTPDTSYELQVRVIAQRGKTRTWSPWSQPMAFRTRPADPKEIFPLPWLRCLLLVLGCFFGFLSCVCVLVKCRYLGPWLKTLLKCHIPDPSEFFSQLSSQHGGDLQKWLSSPVPQSFFSPTGSAPEISPLEVLDRDSKTMQMLLFQKEKASSPSPSGHSQASCFTNQGYFFFHLSNALEIESCQVYFTYDPCMEEDVEEDGPRLPEESPLPPLLPFTGEQDDYCAFPPRDDLLLFSPSMSTPNTAYGNSITPEERPPLSLQEGLPSLASPDLMGLQHPLELELGDDGEGMSTNSSGQQASVPEAALMGTTKTEARPVLTLNTDAYLSLQELQAQDSAHLI.

An N-terminal signal peptide occupies residues 1–26 (MATVDLSWRLPLYILLLLLATTWVSA). At 27–239 (AVNDCSHLKC…FRTRPADPKE (213 aa)) the chain is on the extracellular side. Cys-36 and Cys-46 are joined by a disulfide. N-linked (GlcNAc...) asparagine glycans are attached at residues Asn-43, Asn-55, and Asn-71. A disulfide bond links Cys-74 and Cys-86. One can recognise a Fibronectin type-III domain in the interval 135–235 (APHSLQVLHI…QPMAFRTRPA (101 aa)). Residue Asn-150 is glycosylated (N-linked (GlcNAc...) asparagine). A WSXWS motif motif is present at residues 221–225 (WSPWS). Residues 240-267 (IFPLPWLRCLLLVLGCFFGFLSCVCVLV) traverse the membrane as a helical segment. Over 268–537 (KCRYLGPWLK…LQAQDSAHLI (270 aa)) the chain is Cytoplasmic. Residues 280–288 (LKCHIPDPS) carry the Box 1 motif motif. Disordered regions lie at residues 442 to 466 (AYGN…SLAS) and 479 to 498 (ELGD…QASV). The span at 487–497 (MSTNSSGQQAS) shows a compositional bias: polar residues.

The protein belongs to the type I cytokine receptor family. Type 4 subfamily. Non-covalent dimer of an alpha and a beta subunit. IL2R exists in 3 different forms: a high affinity dimer, an intermediate affinity monomer (beta subunit), and a low affinity monomer (alpha subunit). The high and intermediate affinity forms also associate with a gamma subunit. Interacts with SHB upon interleukin stimulation.

The protein resides in the cell membrane. Its subcellular location is the cell surface. In terms of biological role, receptor for interleukin-2. This beta subunit is involved in receptor mediated endocytosis and transduces the mitogenic signals of IL2. Probably in association with IL15RA, involved in the stimulation of neutrophil phagocytosis by IL15. This is Interleukin-2 receptor subunit beta (Il2rb) from Rattus norvegicus (Rat).